The following is a 614-amino-acid chain: MDGSVAKGTSCIQDSQSSSVIANTDATLGRHLARRLVEIGIQDVFSVPGDFNLTLLDHLIAEPRLKNIGCCNELNAGYAADGYARARGVGACVVTFTVGGLSVLNAIAGAYSENLPVICIVGGPNTNDYGTNRILHHTIGLPDFSQELRCFQTVTCYQAVVNNLDDAHEQIDRAISTALKESKPVYISISCNLPAIPHPTFSRDPIPFSLSPRLSNKRGLEAAVDAAVTFLSKAVKPVMIGGPKLRVAKACDAFVELADSSGYAMAVMLQPKGLVAEQHPHFIGTYWGAVGTSYCAEIVESADAYLFAGPIFNDYSSVGYSLLIKKEKSIIVQPDRVVIGNGPAFGCVLMKDFLSELAKKIKKNETAYENYRRIFVPEGTPLKSEPNEPLRVNVLFQHIQKMLSDETAVIAETGDSWFNCQKLKLPEGCGYVTNNSLSAWYPFYLQTLEEKSSCCRYEFQMQYGSIGWSVGATLGYAQSVPKKRVISCIGDGSFQVTAQDVSTMIRCEQKNIIFLINNGGYTIEVEIHDGPYNVIKNWNYTGLVDAIHNGEGNCWTMKVRTEEELTEAIATATGEKKDCLCFIEVIVHKDDTSKELLEWGSRVCSANGRPPNPQ.

2 residues coordinate substrate: Asp-50 and His-137. The thiamine pyrophosphate binding stretch occupies residues 415–523; the sequence is DSWFNCQKLK…FLINNGGYTI (109 aa). Mg(2+) contacts are provided by Asp-491, Asn-518, and Gly-520. Residue Glu-524 coordinates substrate.

The protein belongs to the TPP enzyme family. In terms of assembly, homotetramer. A metal cation serves as cofactor. The cofactor is thiamine diphosphate. Pollen.

The catalysed reaction is a 2-oxocarboxylate + H(+) = an aldehyde + CO2. This is Pyruvate decarboxylase 2 (PDC2) from Nicotiana tabacum (Common tobacco).